The primary structure comprises 151 residues: Ribosome maturation factor RimP (151 aa).

Belongs to the RimP family.

Its subcellular location is the cytoplasm. Its function is as follows. Required for maturation of 30S ribosomal subunits. The sequence is that of Ribosome maturation factor RimP from Desulfotalea psychrophila (strain LSv54 / DSM 12343).